Here is a 527-residue protein sequence, read N- to C-terminus: Serine/threonine-protein kinase CHK1 (527 aa).

A Protein kinase domain is found at 15–281 (VVLGDTVGQG…LKALKLHPWV (267 aa)). Residues 21-29 (VGQGAFACV) and Lys45 each bind ATP. The active-site Proton acceptor is Asp142.

Belongs to the protein kinase superfamily. CAMK Ser/Thr protein kinase family. NIM1 subfamily.

The protein resides in the nucleus. It carries out the reaction L-seryl-[protein] + ATP = O-phospho-L-seryl-[protein] + ADP + H(+). The catalysed reaction is L-threonyl-[protein] + ATP = O-phospho-L-threonyl-[protein] + ADP + H(+). Its function is as follows. Serine/threonine-protein kinase which is required for checkpoint-mediated cell cycle arrest and activation of DNA repair in response to the presence of DNA damage or unreplicated DNA. May also negatively regulate cell cycle progression during unperturbed cell cycles. Controls phosphorylation and abundance of PDS1 to prevent anaphase entry. Also helps prevent mitotic exit. This Saccharomyces cerevisiae (strain ATCC 204508 / S288c) (Baker's yeast) protein is Serine/threonine-protein kinase CHK1 (CHK1).